The chain runs to 1072 residues: Rho family-interacting cell polarization regulator 2 (1072 aa).

The stretch at 83–112 forms a coiled coil; that stretch reads NGLDEYLEVHQTELDKLTAQLKDMRRNSRL. Residues 173–470 form a necessary for interaction with NCAM and myoblast protrusion formation region; sequence RESLTEINRS…ATTATQHRAR (298 aa). Disordered regions lie at residues 439-465 and 683-718; these read DRVP…TTAT and EVEK…AGSP. Positions 447–460 are enriched in polar residues; the sequence is AEPSSAHVTSSPDI. The segment covering 683 to 698 has biased composition (basic and acidic residues); the sequence is EVEKNSYRTEHPEARG.

It belongs to the RIPOR family. As to quaternary structure, homooligomer; homooligomerization is regulated by RHOC and leads to the formation of concatemers through the association of N- and C-termini. Interacts with NCAM; this interaction is necessary for myoblast protrusion formation. Expressed in myoblast and myotubes (at protein level). Expressed in brain, eyes and skeletal muscle.

It is found in the cytoplasm. The protein resides in the cytoskeleton. The protein localises to the cell projection. It localises to the filopodium. Its subcellular location is the apical cell membrane. It is found in the stereocilium. The protein resides in the stereocilium membrane. In terms of biological role, acts as an inhibitor of the small GTPase RHOA and plays several roles in the regulation of myoblast and hair cell differentiation, lymphocyte T proliferation and neutrophil polarization. Plays a role in fetal mononuclear myoblast differentiation by promoting filopodia and myotube formation. Maintains naive T lymphocytes in a quiescent state and prevents chemokine-induced T lymphocyte responses, such as cell adhesion, polarization and migration. Involved also in the regulation of neutrophil polarization, chemotaxis and adhesion. Required for normal development of inner and outer hair cell stereocilia within the cochlea of the inner ear. Plays a role for maintaining the structural organization of the basal domain of stereocilia. Involved in mechanosensory hair cell function. Required for normal hearing. This Coturnix japonica (Japanese quail) protein is Rho family-interacting cell polarization regulator 2.